The chain runs to 208 residues: Uracil phosphoribosyltransferase (208 aa).

5-phospho-alpha-D-ribose 1-diphosphate contacts are provided by residues Arg-78, Arg-103, and 130-138 (DPMLATGGS). Uracil contacts are provided by residues Ile-193 and 198 to 200 (GDA). Residue Asp-199 participates in 5-phospho-alpha-D-ribose 1-diphosphate binding.

This sequence belongs to the UPRTase family. Mg(2+) serves as cofactor.

It catalyses the reaction UMP + diphosphate = 5-phospho-alpha-D-ribose 1-diphosphate + uracil. The protein operates within pyrimidine metabolism; UMP biosynthesis via salvage pathway; UMP from uracil: step 1/1. Its activity is regulated as follows. Allosterically activated by GTP. In terms of biological role, catalyzes the conversion of uracil and 5-phospho-alpha-D-ribose 1-diphosphate (PRPP) to UMP and diphosphate. The polypeptide is Uracil phosphoribosyltransferase (Klebsiella pneumoniae subsp. pneumoniae (strain ATCC 700721 / MGH 78578)).